Reading from the N-terminus, the 594-residue chain is Aspartate--tRNA ligase (594 aa).

Glu-171 contributes to the L-aspartate binding site. Residues 195 to 198 form an aspartate region; it reads QLFK. Arg-217 serves as a coordination point for L-aspartate. Residues 217-219 and Gln-226 contribute to the ATP site; that span reads RDE. His-449 serves as a coordination point for L-aspartate. Glu-483 lines the ATP pocket. An L-aspartate-binding site is contributed by Arg-490. 535–538 contacts ATP; sequence GLDR.

It belongs to the class-II aminoacyl-tRNA synthetase family. Type 1 subfamily. Homodimer.

It is found in the cytoplasm. The catalysed reaction is tRNA(Asp) + L-aspartate + ATP = L-aspartyl-tRNA(Asp) + AMP + diphosphate. Its function is as follows. Catalyzes the attachment of L-aspartate to tRNA(Asp) in a two-step reaction: L-aspartate is first activated by ATP to form Asp-AMP and then transferred to the acceptor end of tRNA(Asp). This chain is Aspartate--tRNA ligase, found in Proteus mirabilis (strain HI4320).